The sequence spans 414 residues: NAD-specific glutamate dehydrogenase (414 aa).

Substrate is bound by residues Lys-70 and Lys-94. The active-site Proton donor is the Lys-106. Residues Thr-190 and Asn-221 each contribute to the NAD(+) site. Ser-348 contacts substrate.

The protein belongs to the Glu/Leu/Phe/Val dehydrogenases family. Homohexamer.

It catalyses the reaction L-glutamate + NAD(+) + H2O = 2-oxoglutarate + NH4(+) + NADH + H(+). This is NAD-specific glutamate dehydrogenase (gluD) from Staphylococcus aureus (strain COL).